A 157-amino-acid chain; its full sequence is MAAGDFRLCDVVLDDTIGRSTPDVEHERAVAIFDLIEENSFAPIGHAGGPYRLNISLVDSKLVFAIRTEEGIDVATHILSLTPFRRIVKDYFMICESYYEAIRSATPSRIEAIDMGRRGIHNEGSQTLKDRLTGKIEVDFDTARRLFTLVCVLYWRG.

This sequence belongs to the UPF0262 family.

This chain is UPF0262 protein Rleg2_0240, found in Rhizobium leguminosarum bv. trifolii (strain WSM2304).